Reading from the N-terminus, the 600-residue chain is Probable pectin methyltransferase QUA3 (600 aa).

At 1–18 (MGHVNLPASKRGNPRQWR) the chain is on the cytoplasmic side. The chain crosses the membrane as a helical; Signal-anchor for type II membrane protein span at residues 19 to 39 (LLDIVTAAFFGIVLLFFILLF). Residues 40–600 (TPLGDSMAAS…SLWKLPSNSH (561 aa)) lie on the Lumenal side of the membrane. N-linked (GlcNAc...) asparagine glycosylation is present at N283.

The protein belongs to the methyltransferase superfamily. As to expression, highly expressed and abundant in suspension-cultured cells, but low levels in seedlings.

It is found in the golgi apparatus membrane. It participates in glycan metabolism; pectin biosynthesis. S-adenosyl-L-methionine (SAM)-dependent methyltransferase (MTase) which mediates the methylesterification of the pectin homogalacturonan (HG) and thus regulates cell wall biosynthesis, at least in suspension-cultured cells. This Arabidopsis thaliana (Mouse-ear cress) protein is Probable pectin methyltransferase QUA3.